Reading from the N-terminus, the 40-residue chain is Cell division inhibitor MciZ (40 aa).

As to quaternary structure, interacts with FtsZ. Binds to the C-terminal polymerization interface of FtsZ. Binds to FtsZ filaments.

Highly effective in inhibiting polymerization at low and intermediate concentrations of GTP and only partially effective at high GTP concentrations. Blocks Z-ring formation in the mother cell during sporulation by inhibiting the polymerization of FtsZ. Binds to the minus end of FtsZ and functions as a filament-capping protein. At high concentrations, is capable of both capping and sequestration of FtsZ. Decreases the GTPase activity of FtsZ. The sequence is that of Cell division inhibitor MciZ from Bacillus subtilis (strain 168).